Here is a 286-residue protein sequence, read N- to C-terminus: Aminoglycoside N(3)-acetyltransferase VIII (286 aa).

This sequence belongs to the antibiotic N-acetyltransferase family.

The enzyme catalyses a 2-deoxystreptamine antibiotic + acetyl-CoA = an N(3)-acetyl-2-deoxystreptamine antibiotic + CoA + H(+). Functionally, resistance to neomycin. The protein is Aminoglycoside N(3)-acetyltransferase VIII (aacC8) of Streptomyces fradiae (Streptomyces roseoflavus).